The sequence spans 229 residues: Small ribosomal subunit protein uS3 (229 aa).

The KH type-2 domain maps to 39 to 107; the sequence is VRKFLEKKLK…PAQINIAEIR (69 aa).

This sequence belongs to the universal ribosomal protein uS3 family. As to quaternary structure, part of the 30S ribosomal subunit. Forms a tight complex with proteins S10 and S14.

Its function is as follows. Binds the lower part of the 30S subunit head. Binds mRNA in the 70S ribosome, positioning it for translation. The polypeptide is Small ribosomal subunit protein uS3 (Shewanella loihica (strain ATCC BAA-1088 / PV-4)).